Reading from the N-terminus, the 75-residue chain is Putative sulfur carrier protein TsuB (75 aa).

Catalysis depends on cysteine 13, which acts as the Cysteine persulfide intermediate.

It belongs to the sulfur carrier protein TusA family.

In terms of biological role, involved in thiosulfate metabolism. The chain is Putative sulfur carrier protein TsuB from Escherichia coli (strain K12).